The chain runs to 279 residues: MKVDLTIEYRGKLITPNQIKLLIALHKTKSQNEAAKLLNIKPSSFNIQLKRLENKLGVKLYYSSPNGTVLTDAGLEILETYNSYSKRLKNHFFTVSGFVSGEIAKILFGNPIITSFDNALKLLKMGFVDVLGVDDSYWIYRLGDERFLKSEIGSCDFNIFLIAYDNFVMVSKKEFNYKNLVGIRFSSQRIVYNILKKEGIKFKVKVRVKNPFRAIELVNEGYSLFLNESLLRYIDGDFNVIYPNFYEKTVHAINFISFGKDIEIDKKEIKKIKKLGFKI.

The HTH lysR-type domain occupies 14–71; the sequence is ITPNQIKLLIALHKTKSQNEAAKLLNIKPSSFNIQLKRLENKLGVKLYYSSPNGTVLT. The segment at residues 31 to 50 is a DNA-binding region (H-T-H motif); the sequence is QNEAAKLLNIKPSSFNIQLK.

The protein belongs to the LysR transcriptional regulatory family.

This is an uncharacterized protein from Methanocaldococcus jannaschii (strain ATCC 43067 / DSM 2661 / JAL-1 / JCM 10045 / NBRC 100440) (Methanococcus jannaschii).